The following is a 423-amino-acid chain: Imidazolonepropionase (423 aa).

H91 and H93 together coordinate Fe(3+). H91 and H93 together coordinate Zn(2+). Positions 100, 163, and 193 each coordinate 4-imidazolone-5-propanoate. Position 163 (Y163) interacts with N-formimidoyl-L-glutamate. Fe(3+) is bound at residue H257. H257 contributes to the Zn(2+) binding site. Q260 provides a ligand contact to 4-imidazolone-5-propanoate. Residue D331 coordinates Fe(3+). Position 331 (D331) interacts with Zn(2+). Residues N333 and G335 each coordinate N-formimidoyl-L-glutamate. T336 is a 4-imidazolone-5-propanoate binding site.

The protein belongs to the metallo-dependent hydrolases superfamily. HutI family. Requires Zn(2+) as cofactor. The cofactor is Fe(3+).

It is found in the cytoplasm. The enzyme catalyses 4-imidazolone-5-propanoate + H2O = N-formimidoyl-L-glutamate. Its pathway is amino-acid degradation; L-histidine degradation into L-glutamate; N-formimidoyl-L-glutamate from L-histidine: step 3/3. Its function is as follows. Catalyzes the hydrolytic cleavage of the carbon-nitrogen bond in imidazolone-5-propanoate to yield N-formimidoyl-L-glutamate. It is the third step in the universal histidine degradation pathway. The protein is Imidazolonepropionase of Bdellovibrio bacteriovorus (strain ATCC 15356 / DSM 50701 / NCIMB 9529 / HD100).